Here is a 223-residue protein sequence, read N- to C-terminus: UPF0441 protein YgiB (223 aa).

Residues 178–195 (TVPKTAMAPKPATTTTVT) are compositionally biased toward low complexity. The disordered stretch occupies residues 178-223 (TVPKTAMAPKPATTTTVTRGGFGESVAKQSTMQRSAAGTSTRSMGG). Residues 204 to 223 (AKQSTMQRSAAGTSTRSMGG) show a composition bias toward polar residues.

Belongs to the UPF0441 family.

This chain is UPF0441 protein YgiB, found in Salmonella enteritidis PT4 (strain P125109).